The chain runs to 131 residues: Large ribosomal subunit protein eL32 (131 aa).

The protein belongs to the eukaryotic ribosomal protein eL32 family. In terms of assembly, component of the large ribosomal subunit. Mature ribosomes consist of a small (40S) and a large (60S) subunit. The 40S subunit contains about 32 different proteins and 1 molecule of RNA (18S). The 60S subunit contains 45 different proteins and 3 molecules of RNA (25S, 5.8S and 5S).

The protein resides in the cytoplasm. In terms of biological role, component of the ribosome, a large ribonucleoprotein complex responsible for the synthesis of proteins in the cell. The small ribosomal subunit (SSU) binds messenger RNAs (mRNAs) and translates the encoded message by selecting cognate aminoacyl-transfer RNA (tRNA) molecules. The large subunit (LSU) contains the ribosomal catalytic site termed the peptidyl transferase center (PTC), which catalyzes the formation of peptide bonds, thereby polymerizing the amino acids delivered by tRNAs into a polypeptide chain. The nascent polypeptides leave the ribosome through a tunnel in the LSU and interact with protein factors that function in enzymatic processing, targeting, and the membrane insertion of nascent chains at the exit of the ribosomal tunnel. In Candida albicans (strain SC5314 / ATCC MYA-2876) (Yeast), this protein is Large ribosomal subunit protein eL32.